A 325-amino-acid polypeptide reads, in one-letter code: D site-binding protein (325 aa).

3 disordered regions span residues 1 to 99 (MARP…APGL), 127 to 200 (GLPP…DTVE), and 229 to 255 (RFSE…EQKD). Residues 17–28 (GPAGTPPGGGAL) show a composition bias toward gly residues. Composition is skewed to low complexity over residues 29–38 (LGLRSLLQGT) and 57–80 (ALPA…PAGA). Ser-86 is subject to Phosphoserine. Residues 129–153 (PPSPPPPGGPSPEPSPARTPAPSPG) show a composition bias toward pro residues. Over residues 157-167 (CGSASPRSSPG) the composition is skewed to low complexity. Positions 255–318 (DEKYWSRRYK…SHYRAVLSRY (64 aa)) constitute a bZIP domain. The interval 257–279 (KYWSRRYKNNEAAKRSRDARRLK) is basic motif. The interval 283 to 297 (ISVRAAFLEKENALL) is leucine-zipper.

This sequence belongs to the bZIP family. PAR subfamily. In terms of assembly, binds DNA as a homodimer or a heterodimer. Can form a heterodimer with TEF. As to expression, ubiquitously expressed. Expressed in the suprachiasmatic nuclei (SCN) and in most peripheral tissues, with a strong circadian rhythmicity.

It is found in the nucleus. This transcriptional activator recognizes and binds to the sequence 5'-RTTAYGTAAY-3' found in the promoter of genes such as albumin, CYP2A4 and CYP2A5. It is not essential for circadian rhythm generation, but modulates important clock output genes. May be a direct target for regulation by the circadian pacemaker component clock. May affect circadian period and sleep regulation. This is D site-binding protein (DBP) from Homo sapiens (Human).